Here is a 148-residue protein sequence, read N- to C-terminus: MGARNKARKRAVDVLYEADLRGEDAVTLLSGRVGSPDLPPVNEYTVTLVEGVTANRQRIDELLVEHAEGWTLARMPAVDRAVLRLGLYELLWRSDDVPPAVAIDEAVELVKALSTDDSPRFVNGVLGRIAGIGDRLRSTLRGANPGAE.

Belongs to the NusB family.

Functionally, involved in transcription antitermination. Required for transcription of ribosomal RNA (rRNA) genes. Binds specifically to the boxA antiterminator sequence of the ribosomal RNA (rrn) operons. The sequence is that of Transcription antitermination protein NusB from Saccharopolyspora erythraea (strain ATCC 11635 / DSM 40517 / JCM 4748 / NBRC 13426 / NCIMB 8594 / NRRL 2338).